The primary structure comprises 240 residues: Lysoplasmalogenase TMEM86A (240 aa).

Residues 1 to 21 lie on the Cytoplasmic side of the membrane; sequence MVSPVTVVKSEGPKLVPFFKA. Residues 22 to 42 form a helical membrane-spanning segment; it reads TCVYFVLWLPSSSPSWVSTLI. Position 43 (K43) is a topological domain, extracellular. Residues 44–64 form a helical membrane-spanning segment; sequence CLPIFCLWLFLLAHGLGFLLA. At 65–70 the chain is on the cytoplasmic side; it reads HPSATR. A helical membrane pass occupies residues 71–91; it reads IFVGLVFSAVGDAFLIWQDQG. Residue Y92 is a topological domain, extracellular. The helical transmembrane segment at 93 to 113 threads the bilayer; the sequence is FVHGLLMFAVTHMFYASAFGM. The Cytoplasmic portion of the chain corresponds to 114–115; sequence QP. A helical transmembrane segment spans residues 116 to 136; sequence LALRTGLVMAALSGLCYALLY. The Extracellular segment spans residues 137–138; it reads PC. The chain crosses the membrane as a helical span at residues 139–159; sequence LSGAFTYLVGVYVALIGFMGW. The Cytoplasmic segment spans residues 160-174; the sequence is RAMAGLRLAGADWRW. Residues 175–195 traverse the membrane as a helical segment; sequence TELAAGSGALFFIISDLTIAL. Over 196–206 the chain is Extracellular; that stretch reads NKFCFPVPYSR. A helical membrane pass occupies residues 207-227; sequence ALIMSTYYVAQMLVALSAVES. At 228–240 the chain is on the cytoplasmic side; that stretch reads REPVEHYRLTKAN.

Belongs to the TMEM86 family. As to expression, expressed in the macrophages.

The protein resides in the endoplasmic reticulum membrane. It carries out the reaction a 1-O-(1Z-alkenyl)-sn-glycero-3-phosphocholine + H2O = a 2,3-saturated aldehyde + sn-glycerol 3-phosphocholine. The enzyme catalyses a 1-O-(1Z-alkenyl)-sn-glycero-3-phosphoethanolamine + H2O = a 2,3-saturated aldehyde + sn-glycero-3-phosphoethanolamine. Functionally, catalyzes the hydrolysis of the vinyl ether bond of choline or ethanolamine lysoplasmalogens, forming fatty aldehyde and glycerophosphocholine or glycerophosphoethanolamine, respectively and is specific for the sn-2-deacylated (lyso) form of plasmalogen. Plays an important role in lysoplasmalogen metabolism in the adipocyte tissue and macrophages. This is Lysoplasmalogenase TMEM86A (TMEM86A) from Homo sapiens (Human).